Reading from the N-terminus, the 312-residue chain is MAIKRKKISVIGAGFTGATTAFLLAKKELGDVVLVDIPQAENPTKGKALDMLESSPVLGFDANIIGTSNYEETADSDIVVITAGIARKPGMSRDDLVQTNQKVMKSVTKEVVKYSPNSIIIVLTNPVDAMTYTVYKESGFPKHRVIGQSGVLDTARFRTFVAQELNLSVKDITGFVLGGHGDDMVPLVRYSYAGGIPLEKLIPKERLEAIVERTRKGGGEIVNLLGNGSAYYAPAASLVEMVEAIVKDQRRVLPAIAYLEGEYGFEGIYLGVPTILGGNGLEQIIELELTDEEKAALEKSAESVRNVMKALI.

Residues 12–17 (GAGFTG) and Asp-36 contribute to the NAD(+) site. Substrate is bound by residues Arg-87 and Arg-93. NAD(+)-binding positions include Asn-100 and 123–125 (LTN). Asn-125 is a binding site for substrate. Ser-149 is modified (phosphoserine). Position 156 (Arg-156) interacts with substrate. His-180 acts as the Proton acceptor in catalysis.

The protein belongs to the LDH/MDH superfamily. MDH type 3 family. Homotetramer.

It carries out the reaction (S)-malate + NAD(+) = oxaloacetate + NADH + H(+). Catalyzes the reversible oxidation of malate to oxaloacetate. This is Malate dehydrogenase from Bacillus israeli.